The sequence spans 1984 residues: Vitellogenin receptor Yl (1984 aa).

Over residues 1-19 (MCQAEHQVHPSEQRIRVES) the composition is skewed to basic and acidic residues. The interval 1–48 (MCQAEHQVHPSEQRIRVESPKMTASRRGFNLTSQTRAHPSSGGSTSSR) is disordered. N30 carries an N-linked (GlcNAc...) asparagine glycan. Over residues 30–48 (NLTSQTRAHPSSGGSTSSR) the composition is skewed to polar residues. LDL-receptor class A domains are found at residues 89 to 125 (RCDAGQFQCRDGGCILQAKMCDGRGDCKDSSDELDCD), 128 to 167 (LCRPPHWFPCAQPHGACLAAELMCNGIDNCPGGEDELNCP), 183 to 221 (SCSKYEFMCQQDRTCIPIDFMCDGRPDCTDKSDEVAGCK), 226 to 263 (TCPGEGHLCANGRCLRRKQWVCDGVDDCGDGSDERGCL), and 265 to 305 (LCEP…DLCH). 20 disulfides stabilise this stretch: C90–C102, C97–C115, C109–C124, C129–C144, C137–C157, C151–C166, C184–C197, C191–C210, C204–C220, C227–C239, C234–C253, C247–C262, C266–C281, C275–C294, C288–C304, C310–C321, C315–C331, C352–C363, C359–C372, and C374–C387. Positions 306–343 (SKPDCDAKKCALGAKCHMMPASGAECFCPKGFRLAKFE) constitute an EGF-like 1 domain. In terms of domain architecture, EGF-like 2; calcium-binding spans 348–388 (DVDECKEQDDLCSQGCENTSGGYRCVCDAGYLLDKDNRTCR). N-linked (GlcNAc...) asparagine glycosylation is found at N365, N384, and N429. 4 LDL-receptor class B repeats span residues 441–485 (SHIY…DWLT), 486–528 (QNIY…WPQK), 529–572 (GLMF…DMHQ), and 573–615 (QRIY…FEDQ). N-linked (GlcNAc...) asparagine glycans are attached at residues N666, N749, and N782. LDL-receptor class B repeat units lie at residues 750 to 792 (GSLI…DHLS), 793 to 836 (RNLY…MPAE), 884 to 925 (QTIF…VHHD), and 934 to 940 (PRIYWTH). N1022 carries N-linked (GlcNAc...) asparagine glycosylation. LDL-receptor class A domains lie at 1024-1063 (TCVEALDCEFRCHSGECLTMNHRCNGRRDCVDNSDEMNCD), 1073-1110 (LCSPNQFACHSGEQCVDKERRCDNRKDCHDHSDEQHCE), 1117-1153 (KCHVHQHGCDNGKCVDSSLVCDGTNDCGDNSDELLCE), 1157-1194 (RCEPGMFQCGSGSCIAGSWECDGRIDCSDGSDEHDKCV), and 1197-1233 (SCPPDMQRCLLGQCLDRSLVCDGHNDCGDKSDELNCG). 15 disulfide bridges follow: C1025–C1040, C1035–C1053, C1047–C1062, C1074–C1087, C1081–C1100, C1094–C1109, C1118–C1130, C1125–C1143, C1137–C1152, C1158–C1170, C1165–C1183, C1177–C1193, C1198–C1210, C1205–C1223, and C1217–C1232. N-linked (GlcNAc...) asparagine glycosylation occurs at N1240. 2 LDL-receptor class A domains span residues 1242-1280 (SCAEDQYQCTSNLKICLPSTVRCNGTTECPRGEDEADCG) and 1282-1319 (VCSIYEFKCRSGRECIRREFRCDGQKDCGDGSDELSCE). Cystine bridges form between C1243-C1257, C1250-C1270, C1264-C1279, C1283-C1296, C1290-C1309, and C1303-C1318. N-linked (GlcNAc...) asparagine glycosylation occurs at N1265. N1326 carries an N-linked (GlcNAc...) asparagine glycan. Residues 1339-1376 (SCRPHLFDCQDGECVDLSRVCNNFPDCTNGHDEGPKCA) form the LDL-receptor class A 13 domain. Intrachain disulfides connect C1340–C1352, C1347–C1365, C1359–C1375, C1422–C1432, and C1428–C1441. The 36-residue stretch at 1418–1453 (DIDECQEQQPCAQLCENTLGGYQCQCHADFMLRQDR) folds into the EGF-like 3; calcium-binding domain. Residues N1475 and N1490 are each glycosylated (N-linked (GlcNAc...) asparagine). LDL-receptor class B repeat units lie at residues 1588-1637 (ARIF…DPHQ) and 1638-1687 (QLLY…YENN). Residues 1800–1820 (WLMALFVLAAGSLIAGLGYMY) form a helical membrane-spanning segment. Residues 1821-1984 (YQYRQRGHTD…GNDANARFVS (164 aa)) are Cytoplasmic-facing. S1926 bears the Phosphoserine mark. Disordered regions lie at residues 1927–1951 (KLHALDGGGAGGDGDGGRGVGRQVP) and 1965–1984 (SAGQFGGNYAGNDANARFVS). The span at 1932-1946 (DGGGAGGDGDGGRGV) shows a compositional bias: gly residues.

Belongs to the LDLR family. In terms of assembly, interacts with osk (isoform A). In terms of tissue distribution, ovary.

It localises to the cell membrane. The protein resides in the cytoplasm. Its subcellular location is the cell cortex. The protein localises to the cytoplasmic vesicle. It is found in the clathrin-coated vesicle membrane. It localises to the early endosome membrane. The protein resides in the endosome. Its subcellular location is the multivesicular body lumen. Cell surface receptor involved in uptake of vitellogenins (yolk proteins) into developing oocytes by receptor-mediated endocytosis. May also mediate uptake of apolpp/apolipophorins and their incorporation into yolk granules. Along with its ligands, required for maintenance of microtubule plus-end orientation towards the posterior pole of oocytes. Involved in polarized localization of germ plasm components, such as osk mRNA and vas protein, to the oocyte posterior cortex. Receptor-mediated endocytosis of vitellogenin receptor ligands is critical for osk (isoform A) mediated actin reorganization and the anchoring of germ plasm components to the oocyte cortex. The polypeptide is Vitellogenin receptor Yl (Drosophila melanogaster (Fruit fly)).